Consider the following 186-residue polypeptide: Elongation factor P (186 aa).

The protein belongs to the elongation factor P family.

The protein resides in the cytoplasm. The protein operates within protein biosynthesis; polypeptide chain elongation. Involved in peptide bond synthesis. Stimulates efficient translation and peptide-bond synthesis on native or reconstituted 70S ribosomes in vitro. Probably functions indirectly by altering the affinity of the ribosome for aminoacyl-tRNA, thus increasing their reactivity as acceptors for peptidyl transferase. The chain is Elongation factor P from Prochlorococcus marinus (strain MIT 9215).